Here is a 393-residue protein sequence, read N- to C-terminus: Carbamoyl phosphate synthase small chain (393 aa).

A CPSase region spans residues 1 to 194 (MSKDTTTYQG…TYVIEAEGEE (194 aa)). 3 residues coordinate L-glutamine: S61, G245, and G247. One can recognise a Glutamine amidotransferase type-1 domain in the interval 195–390 (RHTVVAYDLG…VELMDADAQK (196 aa)). C273 acts as the Nucleophile in catalysis. Residues F274, Q277, N315, G317, and F318 each contribute to the L-glutamine site. Residues H363 and E365 contribute to the active site.

It belongs to the CarA family. As to quaternary structure, composed of two chains; the small (or glutamine) chain promotes the hydrolysis of glutamine to ammonia, which is used by the large (or ammonia) chain to synthesize carbamoyl phosphate. Tetramer of heterodimers (alpha,beta)4.

The enzyme catalyses hydrogencarbonate + L-glutamine + 2 ATP + H2O = carbamoyl phosphate + L-glutamate + 2 ADP + phosphate + 2 H(+). It catalyses the reaction L-glutamine + H2O = L-glutamate + NH4(+). It functions in the pathway amino-acid biosynthesis; L-arginine biosynthesis; carbamoyl phosphate from bicarbonate: step 1/1. Its pathway is pyrimidine metabolism; UMP biosynthesis via de novo pathway; (S)-dihydroorotate from bicarbonate: step 1/3. Functionally, small subunit of the glutamine-dependent carbamoyl phosphate synthetase (CPSase). CPSase catalyzes the formation of carbamoyl phosphate from the ammonia moiety of glutamine, carbonate, and phosphate donated by ATP, constituting the first step of 2 biosynthetic pathways, one leading to arginine and/or urea and the other to pyrimidine nucleotides. The small subunit (glutamine amidotransferase) binds and cleaves glutamine to supply the large subunit with the substrate ammonia. The sequence is that of Carbamoyl phosphate synthase small chain from Corynebacterium glutamicum (strain ATCC 13032 / DSM 20300 / JCM 1318 / BCRC 11384 / CCUG 27702 / LMG 3730 / NBRC 12168 / NCIMB 10025 / NRRL B-2784 / 534).